A 304-amino-acid polypeptide reads, in one-letter code: HTH-type transcriptional activator CmpR (304 aa).

The HTH lysR-type domain occupies 1 to 61 (MKNATLHQFE…EQIGRKIYLT (61 aa)). The segment at residues 21 to 40 (FTKAAEELFLTQPTVSQQMK) is a DNA-binding region (H-T-H motif).

This sequence belongs to the LysR transcriptional regulatory family.

It localises to the cytoplasm. Activates transcription of the cmpABCD operon under carbon dioxide-limited conditions. Specifically binds to the cmpR-cmpA intergenic region. The protein is HTH-type transcriptional activator CmpR (cmpR) of Synechocystis sp. (strain ATCC 27184 / PCC 6803 / Kazusa).